We begin with the raw amino-acid sequence, 919 residues long: Translation initiation factor IF-2 (919 aa).

Residues M93 to P107 show a composition bias toward basic and acidic residues. Disordered stretches follow at residues M93 to P145 and K158 to E279. A compositionally biased stretch (pro residues) spans L136–P145. The segment covering K158–K171 has biased composition (basic and acidic residues). The segment covering K172–K193 has biased composition (low complexity). 2 stretches are compositionally biased toward basic and acidic residues: residues P194–E203 and G256–E279. One can recognise a tr-type G domain in the interval P420–K589. The segment at G429 to T436 is G1. G429–T436 lines the GTP pocket. Residues G454 to A458 form a G2 region. The tract at residues D475–G478 is G3. GTP is bound by residues D475–H479 and N529–D532. The segment at N529 to D532 is G4. A G5 region spans residues S565–K567.

The protein belongs to the TRAFAC class translation factor GTPase superfamily. Classic translation factor GTPase family. IF-2 subfamily.

Its subcellular location is the cytoplasm. Its function is as follows. One of the essential components for the initiation of protein synthesis. Protects formylmethionyl-tRNA from spontaneous hydrolysis and promotes its binding to the 30S ribosomal subunits. Also involved in the hydrolysis of GTP during the formation of the 70S ribosomal complex. The polypeptide is Translation initiation factor IF-2 (Syntrophus aciditrophicus (strain SB)).